The following is a 522-amino-acid chain: Sorting nexin-1 (522 aa).

Residues 1–142 (MASGGGGCSA…ELEEEEQEDQ (142 aa)) form a disordered region. 2 positions are modified to phosphoserine: Ser32 and Ser39. Residues 35-45 (EAGDSDTEGED) are compositionally biased toward acidic residues. Thr41 and Thr48 each carry phosphothreonine. The span at 55–65 (KPQSPKKTTSL) shows a compositional bias: polar residues. Residues Ser58 and Ser72 each carry the phosphoserine modification. The span at 71–80 (GSKENGIHEE) shows a compositional bias: basic and acidic residues. Residues 98–107 (LDSTQNNQKT) show a composition bias toward polar residues. Acidic residues predominate over residues 132 to 142 (EELEEEEQEDQ). The 130-residue stretch at 143–272 (FDLTVGITDP…EFLEKEELPR (130 aa)) folds into the PX domain. A 1,2-diacyl-sn-glycero-3-phospho-(1D-myo-inositol-3-phosphate)-binding residues include Arg186, Ser188, and Lys214. Ser188 is modified (phosphoserine). Residue Lys237 is modified to N6-acetyllysine. An a 1,2-diacyl-sn-glycero-3-phospho-(1D-myo-inositol-3-phosphate)-binding site is contributed by Arg238. Ser280 is subject to Phosphoserine. Positions 281–298 (GAGLLKMFNKATDAVSKM) are membrane-binding amphipathic helix. Residues 302 to 522 (MNESDIWFEE…AFLPEARAIS (221 aa)) enclose the BAR domain.

It belongs to the sorting nexin family. Predominantly forms heterodimers with BAR domain-containing sorting nexins SNX5, SNX6 and SNX32; can self-associate to form homodimers. The heterodimers are proposed to self-assemble into helical arrays on the membrane to stabilize and expand local membrane curvature underlying endosomal tubule formation. Thought to be a component of the originally described retromer complex (also called SNX-BAR retromer) which is a pentamer containing the heterotrimeric retromer cargo-selective complex (CSC), also described as vacuolar protein sorting subcomplex (VPS) and a heterodimeric membrane-deforming subcomplex formed between SNX1 or SNX2 and SNX5 or SNX6 (also called SNX-BAR subcomplex); the respective CSC and SNX-BAR subcomplexes associate with low affinity. Interacts with SNX5, SNX6, SNX32, VPS26A, VPS29, VPS35, DRD5, DENND5A, KALRN, RHOG (GDP-bound form). The interaction with SNX2 is reported controversially. Interacts with DNAJC13; prevented by presence of HGS. Interacts with HGS.

Its subcellular location is the endosome membrane. It is found in the golgi apparatus. It localises to the trans-Golgi network membrane. The protein localises to the early endosome membrane. The protein resides in the cell projection. Its subcellular location is the lamellipodium. Functionally, involved in several stages of intracellular trafficking. Interacts with membranes containing phosphatidylinositol 3-phosphate (PtdIns(3P)) or phosphatidylinositol 3,5-bisphosphate (PtdIns(3,5)P2). Acts in part as component of the retromer membrane-deforming SNX-BAR subcomplex. The SNX-BAR retromer mediates retrograde transport of cargo proteins from endosomes to the trans-Golgi network (TGN) and is involved in endosome-to-plasma membrane transport for cargo protein recycling. The SNX-BAR subcomplex functions to deform the donor membrane into a tubular profile called endosome-to-TGN transport carrier (ETC). Can sense membrane curvature and has in vitro vesicle-to-membrane remodeling activity. Involved in retrograde endosome-to-TGN transport of lysosomal enzyme receptors (IGF2R, M6PR and SORT1). Plays a role in targeting ligand-activated EGFR to the lysosomes for degradation after endocytosis from the cell surface and release from the Golgi. Involvement in retromer-independent endocytic trafficking of P2RY1 and lysosomal degradation of protease-activated receptor-1/F2R. Promotes KALRN- and RHOG-dependent but retromer-independent membrane remodeling such as lamellipodium formation; the function is dependent on GEF activity of KALRN. Required for endocytosis of DRD5 upon agonist stimulation but not for basal receptor trafficking. In Rattus norvegicus (Rat), this protein is Sorting nexin-1 (Snx1).